Consider the following 325-residue polypeptide: Chain length determinant protein (325 aa).

The Cytoplasmic segment spans residues 1–31; that stretch reads MRVENNNVSGQNHDPEQIDLIDLLVQLWRGK. The chain crosses the membrane as a helical span at residues 32-52; sequence MTIIISVIVAIALAIGYLAVA. Over 53 to 294 the chain is Periplasmic; it reads KEKWTSTAII…LPIRRDSPKK (242 aa). A helical membrane pass occupies residues 295 to 315; the sequence is AITLILAVLLGGMVGAGIVLG. At 316–325 the chain is on the cytoplasmic side; it reads RNALRNYNAK.

The protein belongs to the WzzB/Cld/Rol family.

It localises to the cell inner membrane. Its pathway is bacterial outer membrane biogenesis; lipopolysaccharide biosynthesis. Functionally, confers a modal distribution of chain length on the O-antigen component of lipopolysaccharide (LPS). Gives rise to a reduced number of short chain molecules and increases in numbers of longer molecules, with a modal value of 13 (in strain O111/M92) and of 17 (in strain K12). The sequence is that of Chain length determinant protein (wzzB) from Escherichia coli.